Consider the following 881-residue polypeptide: Receptor-like protein 41 (881 aa).

Positions 1–21 (MSELLLRLNFLLLLLLSCVSP) are cleaved as a signal peptide. Residues 22–844 (SSFVTFNNPV…EEQEQVLNWE (823 aa)) lie on the Extracellular side of the membrane. 5 N-linked (GlcNAc...) asparagine glycosylation sites follow: asparagine 58, asparagine 70, asparagine 91, asparagine 109, and asparagine 145. 16 LRR repeats span residues 97-121 (FHEL…KFGM), 122-145 (LNKL…SFSN), 146-169 (LSML…VRNL), 170-195 (RKLR…LFEL), 197-219 (HLTY…EFGN), 220-244 (LNKL…ISNL), 245-267 (TQLT…VQNL), 268-291 (TKLS…LFTM), 293-317 (FLSY…SSSS), 319-340 (LESL…ISKL), 342-364 (NLKE…LFSS), 365-390 (FKSL…SYIS), 391-412 (LTLE…ILKS), 413-437 (LPNL…LWSL), 439-462 (RLSS…ILVN), and 463-486 (SSVQ…PLSI). Asparagine 189 carries N-linked (GlcNAc...) asparagine glycosylation. N-linked (GlcNAc...) asparagine glycosylation is found at asparagine 243 and asparagine 266. Residues asparagine 305 and asparagine 312 are each glycosylated (N-linked (GlcNAc...) asparagine). Residue asparagine 402 is glycosylated (N-linked (GlcNAc...) asparagine). Asparagine 462 carries an N-linked (GlcNAc...) asparagine glycan. An LRR 17; degenerate repeat occupies 487–506 (IYFSARYNRFKGDIPLSICN). Asparagine 506 and asparagine 519 each carry an N-linked (GlcNAc...) asparagine glycan. LRR repeat units follow at residues 507–528 (RSSL…PPCL), 529–552 (SNLL…YFAD), 554–576 (PLRS…LLNC), 578–599 (ALQF…YLKV), 600–624 (LPKL…NQGS), 627–651 (FPEL…FFVN), 701–724 (TSSA…IGLL), 725–748 (KALI…LANL), 749–772 (VKIE…LGTL), and 774–797 (FLAY…QITG). A glycan (N-linked (GlcNAc...) asparagine) is linked at asparagine 575. Asparagine 731 carries an N-linked (GlcNAc...) asparagine glycan. An N-linked (GlcNAc...) asparagine glycan is attached at asparagine 779. The chain crosses the membrane as a helical span at residues 845-865 (GVAIGYGVGVLLGLAIAQLIA). Residues 866-881 (SYKPEWLACLIKSRNR) lie on the Cytoplasmic side of the membrane.

The protein belongs to the RLP family.

It is found in the cell membrane. May be involved in ABA-induced senescence responses. The chain is Receptor-like protein 41 from Arabidopsis thaliana (Mouse-ear cress).